Here is a 132-residue protein sequence, read N- to C-terminus: Small ribosomal subunit protein uS8 (132 aa).

The protein belongs to the universal ribosomal protein uS8 family. In terms of assembly, part of the 30S ribosomal subunit. Contacts proteins S5 and S12.

In terms of biological role, one of the primary rRNA binding proteins, it binds directly to 16S rRNA central domain where it helps coordinate assembly of the platform of the 30S subunit. The sequence is that of Small ribosomal subunit protein uS8 from Clostridium beijerinckii (strain ATCC 51743 / NCIMB 8052) (Clostridium acetobutylicum).